Consider the following 367-residue polypeptide: Centromere protein L (367 aa).

This sequence belongs to the CENP-L/IML3 family.

The protein resides in the nucleus. Its subcellular location is the chromosome. The protein localises to the centromere. Probable component of a centromeric complex involved in assembly of kinetochore proteins, mitotic progression and chromosome segregation. This chain is Centromere protein L (cenpl), found in Danio rerio (Zebrafish).